We begin with the raw amino-acid sequence, 117 residues long: Large ribosomal subunit protein eL34 (117 aa).

S12 is modified (phosphoserine). N6-acetyllysine is present on residues K36 and K43. A Glycyl lysine isopeptide (Lys-Gly) (interchain with G-Cter in SUMO2) cross-link involves residue K108.

The protein belongs to the eukaryotic ribosomal protein eL34 family. Component of the large ribosomal subunit.

It localises to the cytoplasm. Its subcellular location is the cytosol. It is found in the endoplasmic reticulum. Its function is as follows. Component of the large ribosomal subunit. The ribosome is a large ribonucleoprotein complex responsible for the synthesis of proteins in the cell. The polypeptide is Large ribosomal subunit protein eL34 (Rpl34) (Rattus norvegicus (Rat)).